The following is a 162-amino-acid chain: Protein cornichon homolog 2 (162 aa).

Topologically, residues 1 to 10 (MAFTFAAFCY) are cytoplasmic. The helical transmembrane segment at 11–31 (MLTLVLCASLIFFIIWHIIAF) threads the bilayer. Residues 32–72 (DDLRTDFKDPIEQGNPSRARERIKNVERVCCLLRKLVVPEY) lie on the Lumenal side of the membrane. A helical transmembrane segment spans residues 73–93 (CIHGLFCLMFMCAAEWVTLGL). Residues 94–138 (NIPLLFYHLWRYFHRPADGSEVMFDPVSIMNVDILNYCQKEAWCK) are Cytoplasmic-facing. A helical membrane pass occupies residues 139–161 (LAFYLLSFFYYLYRVGATVRYVS). A162 is a topological domain (lumenal).

Belongs to the cornichon family.

Its subcellular location is the membrane. In terms of biological role, regulates the trafficking and gating properties of AMPA-selective glutamate receptors (AMPARs). This Xenopus laevis (African clawed frog) protein is Protein cornichon homolog 2 (cnih2).